Here is a 231-residue protein sequence, read N- to C-terminus: MSMIPRLLRRMAAVLAGLALLLVALAVSYRWVPPPGSPLMAIRLAQGAPGIDRRWVPLDAISPHLVAAVVASEDSRFCTHHGIDWDAVEAARDHNEAGGRLRGASTLSMQTAKNAFLWPDRTWLRKGAELGFTLLIEATWPKRRIAEVYLNLAEWGDGIFGAEAAARRHFGKPAADLSAQEAALLAAVLPNPRRWSPERPTAYIRNRAATIERRMAIVRRDGLAACILDPA.

Residues 12–34 traverse the membrane as a helical segment; the sequence is AAVLAGLALLLVALAVSYRWVPP.

The protein belongs to the glycosyltransferase 51 family.

It is found in the cell inner membrane. It catalyses the reaction [GlcNAc-(1-&gt;4)-Mur2Ac(oyl-L-Ala-gamma-D-Glu-L-Lys-D-Ala-D-Ala)](n)-di-trans,octa-cis-undecaprenyl diphosphate + beta-D-GlcNAc-(1-&gt;4)-Mur2Ac(oyl-L-Ala-gamma-D-Glu-L-Lys-D-Ala-D-Ala)-di-trans,octa-cis-undecaprenyl diphosphate = [GlcNAc-(1-&gt;4)-Mur2Ac(oyl-L-Ala-gamma-D-Glu-L-Lys-D-Ala-D-Ala)](n+1)-di-trans,octa-cis-undecaprenyl diphosphate + di-trans,octa-cis-undecaprenyl diphosphate + H(+). It functions in the pathway cell wall biogenesis; peptidoglycan biosynthesis. In terms of biological role, peptidoglycan polymerase that catalyzes glycan chain elongation from lipid-linked precursors. The sequence is that of Biosynthetic peptidoglycan transglycosylase from Rhodospirillum centenum (strain ATCC 51521 / SW).